A 637-amino-acid polypeptide reads, in one-letter code: ATP-dependent rRNA helicase SPB4 (637 aa).

The Q motif signature appears at 14 to 42 (WDTLNPPLSEWIRDAVATMGFDQMTPVQA). One can recognise a Helicase ATP-binding domain in the interval 45 to 247 (LPHFMGNKDV…RVGLRNPVKI (203 aa)). Position 58–65 (58–65 (AVTGSGKT)) interacts with ATP. Residues 195 to 198 (DEAD) carry the DEAD box motif. A Helicase C-terminal domain is found at 283 to 438 (ALAELLRQLP…TITTSEDDAA (156 aa)). A coiled-coil region spans residues 524–631 (KEKTREQQRK…AAAKQEKDGE (108 aa)). Composition is skewed to basic and acidic residues over residues 535-553 (ALEE…EEFK), 563-576 (SAKH…VERR), 583-618 (RDAE…EKAA), and 625-637 (KQEK…GFDD). Residues 535-637 (ALEEEKSGVK…KDGEFKGFDD (103 aa)) form a disordered region.

It belongs to the DEAD box helicase family. DDX55/SPB4 subfamily. As to quaternary structure, component of pre-60S ribosomal complexes.

Its subcellular location is the nucleus. It localises to the nucleolus. The enzyme catalyses ATP + H2O = ADP + phosphate + H(+). In terms of biological role, ATP-binding RNA helicase involved in the biogenesis of 60S ribosomal subunits. Binds 90S pre-ribosomal particles and dissociates from pre-60S ribosomal particles after processing of 27SB pre-rRNA. Required for the normal formation of 18S rRNA through the processing of pre-rRNAs at sites A0, A1 and A2, and the normal formation of 25S and 5.8S rRNAs through the processing of pre-rRNAs at sites C1 and C2. The chain is ATP-dependent rRNA helicase SPB4 from Gibberella zeae (strain ATCC MYA-4620 / CBS 123657 / FGSC 9075 / NRRL 31084 / PH-1) (Wheat head blight fungus).